We begin with the raw amino-acid sequence, 98 residues long: Nuclear protein 2 (98 aa).

Residues 1–11 (MEPAAPTVQPR) are compositionally biased toward low complexity. Disordered stretches follow at residues 1-24 (MEPAAPTVQPRAQPPPPDVWPPVG) and 78-98 (LNSQRKRRQRQLQPRPRTRLT). The span at 81–98 (QRKRRQRQLQPRPRTRLT) shows a compositional bias: basic residues.

This sequence belongs to the NUPR family.

The protein localises to the nucleus. Acts as a transcriptional repressor by inhibiting gene expression at the NUPR1 promoter in a p53/TP53-dependent manner in cancer cells. Involved in the G1 cell cycle arrest, and in a decrease in cell viability and cell proliferation. Plays a role as a negative regulator of the protumoral factor NUPR1. This chain is Nuclear protein 2, found in Bos taurus (Bovine).